Consider the following 179-residue polypeptide: Large ribosomal subunit protein uL5 (179 aa).

This sequence belongs to the universal ribosomal protein uL5 family. As to quaternary structure, part of the 50S ribosomal subunit; part of the 5S rRNA/L5/L18/L25 subcomplex. Contacts the 5S rRNA and the P site tRNA. Forms a bridge to the 30S subunit in the 70S ribosome.

Functionally, this is one of the proteins that bind and probably mediate the attachment of the 5S RNA into the large ribosomal subunit, where it forms part of the central protuberance. In the 70S ribosome it contacts protein S13 of the 30S subunit (bridge B1b), connecting the 2 subunits; this bridge is implicated in subunit movement. Contacts the P site tRNA; the 5S rRNA and some of its associated proteins might help stabilize positioning of ribosome-bound tRNAs. This Deinococcus geothermalis (strain DSM 11300 / CIP 105573 / AG-3a) protein is Large ribosomal subunit protein uL5.